A 164-amino-acid polypeptide reads, in one-letter code: MTKLNELAPREGSTKNRMRVGRGPGSGKGKTAGRGVKGQKARTGVSIAGFEGGQMPLHMRMPKRGFNSRNRKDFAEVNLWRIEQAIAAGKLDAKAAIDAEALLKAGVIRRAKDGVKLLGKGELKSKLNLTVYSATASARAAVEKAGGKLTTTKPEAAQDASAEA.

Disordered regions lie at residues 1-49 (MTKL…SIAG) and 143-164 (EKAG…SAEA). Gly residues predominate over residues 22–36 (RGPGSGKGKTAGRGV).

It belongs to the universal ribosomal protein uL15 family. In terms of assembly, part of the 50S ribosomal subunit.

In terms of biological role, binds to the 23S rRNA. This chain is Large ribosomal subunit protein uL15, found in Phenylobacterium zucineum (strain HLK1).